The chain runs to 506 residues: Plant intracellular Ras-group-related LRR protein 1 (506 aa).

The interval 24-48 (TAKSSSSSDVEPPPSKSDPSSSSNH) is disordered. The stretch at 143–193 (KSILKLNELHESYEKLLKEAEERLVRIYESAEKNAAAVAEEEAAEVEVNEE) forms a coiled coil. 10 LRR repeats span residues 203–225 (ENPL…AFGK), 226–249 (IQGL…IAGL), 251–272 (NLLE…IGLL), 273–295 (SKLK…ICHC), 297–319 (SLVV…GFEL), 320–342 (VKLE…IGEM), 344–364 (SLRY…SFGL), 365–389 (LTNL…SFGD), 390–412 (LISL…AFGT), and 414–436 (VNLT…VVKQ). The GVYW signature appears at 437–449 (GVDAVKMYMGKRW).

The protein belongs to the SHOC2 family. As to expression, widely expressed.

In terms of biological role, leucine-rich repeat protein that likely mediates protein interactions, possibly in the context of signal transduction. PIRL1 acts redundantly with PIRL9 in the differentiation of microspores into pollen. This chain is Plant intracellular Ras-group-related LRR protein 1 (PIRL1), found in Arabidopsis thaliana (Mouse-ear cress).